Consider the following 181-residue polypeptide: CAPA peptides (181 aa).

Positions 1-22 (MQDNRFFILMILLVFSTSLNQG) are cleaved as a signal peptide. Residues 23–29 (QKLKAND) constitute a propeptide that is removed on maturation. Residue isoleucine 41 is modified to Isoleucine amide. Residues 44-54 (NSEISSFSRSE) constitute a propeptide that is removed on maturation. An Isoleucine amide modification is found at isoleucine 65. Residues 68-181 (SDVSSFDNLN…ENERDTANFL (114 aa)) constitute a propeptide that is removed on maturation. Residues 159–181 (TQGQGGYTPRLGRENERDTANFL) form a disordered region. The segment covering 169–181 (LGRENERDTANFL) has biased composition (basic and acidic residues).

Post-translationally, a pyrokinin potentially constituted by residues Asn-158 to Gly-170 has so far not been detected and might be completely absent in ants. As to expression, periviscerokinin 1 and 2 are expressed in central brain, antennal lobes and gnathal, thoracic and abominal ganglia. Periviscerokinin 2 is also expressed in the retrocerebral complex (at protein level).

The protein localises to the secreted. Functionally, periviscerokinins mediate visceral muscle contractile activity (myotropic activity). This Camponotus floridanus (Florida carpenter ant) protein is CAPA peptides.